Here is a 347-residue protein sequence, read N- to C-terminus: Heat-inducible transcription repressor HrcA (347 aa).

Belongs to the HrcA family.

Functionally, negative regulator of class I heat shock genes (grpE-dnaK-dnaJ and groELS operons). Prevents heat-shock induction of these operons. In Rhodococcus jostii (strain RHA1), this protein is Heat-inducible transcription repressor HrcA.